The primary structure comprises 471 residues: 3-isopropylmalate dehydratase large subunit (471 aa).

The [4Fe-4S] cluster site is built by cysteine 349, cysteine 409, and cysteine 412.

The protein belongs to the aconitase/IPM isomerase family. LeuC type 1 subfamily. Heterodimer of LeuC and LeuD. Requires [4Fe-4S] cluster as cofactor.

The enzyme catalyses (2R,3S)-3-isopropylmalate = (2S)-2-isopropylmalate. It participates in amino-acid biosynthesis; L-leucine biosynthesis; L-leucine from 3-methyl-2-oxobutanoate: step 2/4. Its function is as follows. Catalyzes the isomerization between 2-isopropylmalate and 3-isopropylmalate, via the formation of 2-isopropylmaleate. This is 3-isopropylmalate dehydratase large subunit from Aliivibrio fischeri (strain MJ11) (Vibrio fischeri).